A 519-amino-acid polypeptide reads, in one-letter code: Molybdate transporter 1 (519 aa).

Transmembrane regions (helical) follow at residues 98-118 (LLHA…SQAI), 164-184 (LGTE…ATTL), 370-390 (AVAL…AMPC), 412-432 (ILLG…LVVL), 436-456 (FPQP…ASVV), 464-484 (GYTF…TGTG), and 485-505 (FLVG…VAAA).

Belongs to the SLC26A/SulP transporter (TC 2.A.53) family.

It localises to the membrane. 60% inhibition by 20 uM tungstate or by lack of glucose in the medium, but no inhibition by sulfate. High affinity molybdate transporter. Acts through an energy-dependent process. In Chlamydomonas reinhardtii (Chlamydomonas smithii), this protein is Molybdate transporter 1 (MOT1).